Here is a 239-residue protein sequence, read N- to C-terminus: Increased recombination centers protein 22-2 (239 aa).

The signal sequence occupies residues 1–19 (MKLSTIFTAFAATIATVAG). The Lumenal segment spans residues 20 to 161 (YETTGSKQTV…AAVSFFDPRL (142 aa)). The helical transmembrane segment at 162–182 (IFLELVLLITFAGLIYVGYEI) threads the bilayer. Over 183–239 (WGKQYFKGVAPVKAKKVSAAKASSPVASGPSTTSATGYDTNWIPESHLKQKKTKKVN) the chain is Cytoplasmic. Residues 201–213 (AAKASSPVASGPS) show a composition bias toward low complexity. Positions 201 to 222 (AAKASSPVASGPSTTSATGYDT) are disordered.

The protein belongs to the IRC22 family.

It is found in the endoplasmic reticulum membrane. Its function is as follows. Is probably involved in a pathway contributing to genomic integrity. In Candida albicans (strain WO-1) (Yeast), this protein is Increased recombination centers protein 22-2 (IRC22-2).